A 446-amino-acid polypeptide reads, in one-letter code: Transcriptional regulator STERILE APETALA (446 aa).

Positions methionine 1–asparagine 10 are enriched in low complexity. Positions methionine 1 to asparagine 32 are disordered.

As to expression, expressed in inflorescence and floral meristems, young floral organ primordia, and later in ovule primordia.

It localises to the nucleus. Transcriptional regulator involved in the specification of floral identity. Acts as A class cadastral protein by repressing the C class floral homeotic gene AGAMOUS in the external flower organs in association with APETALA2 and other repressors. Is required to maintain floral meristem identity in concert with AGAMOUS. Also interacts with APETALA2 to ensure the normal development of ovule. The chain is Transcriptional regulator STERILE APETALA (SAP) from Arabidopsis thaliana (Mouse-ear cress).